A 379-amino-acid chain; its full sequence is MGVMNTEYQSHLIQEIRQNNYRLERGDVTILLAEAFGFCWGVERAVAMAYETRQHFPGDRLWITNEIIHNPSVNQRLREMEVNFIDVVNGEKDFSGVAKGDVVILPAFGASVEEMQLLNDRECTIVDTTCPWVSKVWNSVEKHKKKEHTSIIHGKYNHEETIATSSFAGTYLIVLNMAEAQKVCDYILHGGDRQEFLDYFANAHSAGFDPDQDLVRLGVANQTTMLKSETEMIGKLFEKTLLQKYGPIELNNHFMSFNTICDATQERQDAMFDLVEEDLSLMVVIGGFNSSNTTHLQEIAVEHGIPSVHIDSGDRIGPGNRVEHKPLGKDLEVLEPWLPAGKITVGVTSGASTPDKVVEEVMKKILAIKEAQPVLEIAG.

Residue Cys-39 coordinates [4Fe-4S] cluster. His-69 provides a ligand contact to (2E)-4-hydroxy-3-methylbut-2-enyl diphosphate. Residue His-69 participates in dimethylallyl diphosphate binding. An isopentenyl diphosphate-binding site is contributed by His-69. Cys-130 lines the [4Fe-4S] cluster pocket. His-158 provides a ligand contact to (2E)-4-hydroxy-3-methylbut-2-enyl diphosphate. His-158 contributes to the dimethylallyl diphosphate binding site. His-158 contributes to the isopentenyl diphosphate binding site. The active-site Proton donor is Glu-160. Residue Thr-223 coordinates (2E)-4-hydroxy-3-methylbut-2-enyl diphosphate. Cys-261 contacts [4Fe-4S] cluster. Ser-290, Ser-291, Asn-292, and Ser-352 together coordinate (2E)-4-hydroxy-3-methylbut-2-enyl diphosphate. Dimethylallyl diphosphate contacts are provided by Ser-290, Ser-291, Asn-292, and Ser-352. 4 residues coordinate isopentenyl diphosphate: Ser-290, Ser-291, Asn-292, and Ser-352.

It belongs to the IspH family. [4Fe-4S] cluster serves as cofactor.

It catalyses the reaction isopentenyl diphosphate + 2 oxidized [2Fe-2S]-[ferredoxin] + H2O = (2E)-4-hydroxy-3-methylbut-2-enyl diphosphate + 2 reduced [2Fe-2S]-[ferredoxin] + 2 H(+). The enzyme catalyses dimethylallyl diphosphate + 2 oxidized [2Fe-2S]-[ferredoxin] + H2O = (2E)-4-hydroxy-3-methylbut-2-enyl diphosphate + 2 reduced [2Fe-2S]-[ferredoxin] + 2 H(+). The protein operates within isoprenoid biosynthesis; dimethylallyl diphosphate biosynthesis; dimethylallyl diphosphate from (2E)-4-hydroxy-3-methylbutenyl diphosphate: step 1/1. It functions in the pathway isoprenoid biosynthesis; isopentenyl diphosphate biosynthesis via DXP pathway; isopentenyl diphosphate from 1-deoxy-D-xylulose 5-phosphate: step 6/6. Catalyzes the conversion of 1-hydroxy-2-methyl-2-(E)-butenyl 4-diphosphate (HMBPP) into a mixture of isopentenyl diphosphate (IPP) and dimethylallyl diphosphate (DMAPP). Acts in the terminal step of the DOXP/MEP pathway for isoprenoid precursor biosynthesis. This is 4-hydroxy-3-methylbut-2-enyl diphosphate reductase from Synechocystis sp. (strain ATCC 27184 / PCC 6803 / Kazusa).